Consider the following 77-residue polypeptide: Large ribosomal subunit protein bL31 (77 aa).

The protein belongs to the bacterial ribosomal protein bL31 family. Type A subfamily. In terms of assembly, part of the 50S ribosomal subunit.

Functionally, binds the 23S rRNA. This chain is Large ribosomal subunit protein bL31, found in Microcystis aeruginosa (strain NIES-843 / IAM M-2473).